Consider the following 977-residue polypeptide: Ephrin type-A receptor 1 (977 aa).

The signal sequence occupies residues 1 to 26 (MERRWPLGLALLLLLLCAPLPPGARA). The Extracellular segment spans residues 27–548 (EEVTLMDTST…PVSRSLTGGE (522 aa)). An Eph LBD domain is found at 28–210 (EVTLMDTSTA…FYQRCAETVH (183 aa)). Fibronectin type-III domains lie at 333–446 (PPSA…MGHA) and 448–539 (SLSG…TSPP). N-linked (GlcNAc...) asparagine glycans are attached at residues N415 and N479. Residues 549–569 (IVAVIFGLLLGIALLIGIYVF) form a helical membrane-spanning segment. Topologically, residues 570–977 (RSRRGQRQRQ…ILCSIQGFKD (408 aa)) are cytoplasmic. Phosphotyrosine; by autocatalysis occurs at positions 600 and 606. One can recognise a Protein kinase domain in the interval 625-885 (LIVDTVIGEG…QLQAHLEQLL (261 aa)). ATP is bound by residues 631-639 (IGEGEFGEV) and K657. D750 (proton acceptor) is an active-site residue. Residue Y782 is modified to Phosphotyrosine; by autocatalysis. Phosphoserine occurs at positions 907 and 911. The SAM domain maps to 914–977 (IPYRSVSEWL…ILCSIQGFKD (64 aa)). The short motif at 975-977 (FKD) is the PDZ-binding element.

It belongs to the protein kinase superfamily. Tyr protein kinase family. Ephrin receptor subfamily. In terms of assembly, homodimer. Forms a signaling complex with LCK; PTK2B/PYK2 and PI3-kinase upon activation by EFNA1; regulates T-lymphocytes migration. Interacts (via SAM domain) with ILK (via ANK repeats); stimulated by EFNA1 but independent of the kinase activity of EPHA1. Interacts (kinase activity-dependent) with PTK2/FAK1. Post-translationally, phosphorylated. Autophosphorylation is stimulated by its ligand EFNA1. In terms of processing, ubiquitinated. In terms of tissue distribution, preferentially expressed in epithelial cells including skin, kidney, liver and thymus. Expressed in myogenic progenitor cells.

The protein resides in the cell membrane. It carries out the reaction L-tyrosyl-[protein] + ATP = O-phospho-L-tyrosyl-[protein] + ADP + H(+). Receptor tyrosine kinase which binds promiscuously membrane-bound ephrin-A family ligands residing on adjacent cells, leading to contact-dependent bidirectional signaling into neighboring cells. The signaling pathway downstream of the receptor is referred to as forward signaling while the signaling pathway downstream of the ephrin ligand is referred to as reverse signaling. Binds with a low affinity EFNA3 and EFNA4 and with a high affinity to EFNA1 which most probably constitutes its cognate/functional ligand. Upon activation by EFNA1 induces cell attachment to the extracellular matrix inhibiting cell spreading and motility through regulation of ILK and downstream RHOA and RAC. Also plays a role in angiogenesis and regulates cell proliferation. May play a role in apoptosis. This Mus musculus (Mouse) protein is Ephrin type-A receptor 1 (Epha1).